The chain runs to 1669 residues: Collagen alpha-1(IV) chain (1669 aa).

The signal sequence occupies residues 1–27 (MGPRLSVWLLLLFAALLLHEERSRAAA). A propeptide spans 28–172 (KGDCGGSGCG…LGHVPGTLLK (145 aa)) (N-terminal propeptide (7S domain)). The segment at 47–1443 (QKGERGLPGL…MGPPGTPSVD (1397 aa)) is disordered. The segment covering 92–104 (TRGPPGAAGYPGN) has biased composition (low complexity). Asparagine 126 carries N-linked (GlcNAc...) asparagine glycosylation. The triple-helical region stretch occupies residues 173–1440 (GERGFPGIPG…PGSMGPPGTP (1268 aa)). Residues 196–214 (VGPPGFTGPPGPPGPPGPP) show a composition bias toward pro residues. 3 positions are modified to 3-hydroxyproline: proline 204, proline 207, and proline 210. A compositionally biased stretch (low complexity) spans 234–247 (QGVSGPPGVPGQAQ). Residues 289 to 298 (PGKDGEKGER) are compositionally biased toward basic and acidic residues. Residues 367–376 (PGQPGPPGFP) show a composition bias toward pro residues. The segment covering 377-387 (TPGQAGAPGFP) has biased composition (low complexity). Pro residues-rich tracts occupy residues 413 to 424 (PGPPGPPGPPGQ) and 436 to 448 (PGPP…PGTP). A compositionally biased stretch (low complexity) spans 485 to 494 (PGEIGFPGQP). Basic and acidic residues-rich tracts occupy residues 497-508 (KGDRGLPGRDGL) and 535-545 (FDMRLKGDKGD). Residues 586 to 595 (GPPGGVGFPG) show a composition bias toward gly residues. 3-hydroxyproline is present on residues proline 587 and proline 602. Proline 603 is modified (4-hydroxyproline). Proline 605 is modified (3-hydroxyproline). A 4-hydroxyproline modification is found at proline 606. A compositionally biased stretch (low complexity) spans 611-620 (IGPVGEKGQA). Residues 621–630 (GFPGGPGSPG) show a composition bias toward gly residues. 4 positions are modified to 4-hydroxyproline: proline 623, proline 626, proline 629, and proline 632. Proline 647 is subject to 3-hydroxyproline. Residues 715–731 (RPGFNGLPGNPGPQGQK) are compositionally biased toward low complexity. Residues 758–767 (GSIGGPGVPG) show a composition bias toward gly residues. The segment covering 784 to 802 (PGPPGVQGPAGPPGVPGIG) has biased composition (pro residues). The span at 803-817 (PPGAMGPPGGQGPPG) shows a compositional bias: gly residues. Low complexity-rich tracts occupy residues 847–875 (SQGL…PGFP) and 994–1003 (DPGLSGTPGS). Residues 1011 to 1020 (GSVGGMGLPG) are compositionally biased toward gly residues. 3-hydroxyproline is present on proline 1214. The segment covering 1220 to 1230 (QPGLPGTPGHP) has biased composition (low complexity). The span at 1247 to 1258 (PGHPGPMGPPGF) shows a compositional bias: pro residues. The span at 1290–1299 (GMPGIGGSPG) shows a compositional bias: gly residues. Low complexity-rich tracts occupy residues 1333 to 1343 (DQGVPGPKGLQ), 1368 to 1391 (PGLK…SVGL), and 1398 to 1412 (PGFD…ETGP). Over residues 1413 to 1428 (FGPPGPRGFPGPPGPD) the composition is skewed to pro residues. Proline 1424 is subject to 3-hydroxyproline. The Collagen IV NC1 domain occupies 1445-1669 (GFLVTRHSQT…SRCQVCMRRT (225 aa)). 6 cysteine pairs are disulfide-bonded: cysteine 1460–cysteine 1551, cysteine 1493–cysteine 1548, cysteine 1505–cysteine 1511, cysteine 1570–cysteine 1665, cysteine 1604–cysteine 1662, and cysteine 1616–cysteine 1622. Methionine 1533 is covalently cross-linked (S-Lysyl-methionine sulfilimine (Met-Lys) (interchain with K-1651)). Lysine 1651 participates in a covalent cross-link: S-Lysyl-methionine sulfilimine (Lys-Met) (interchain with M-1533).

Belongs to the type IV collagen family. As to quaternary structure, there are six type IV collagen isoforms, alpha 1(IV)-alpha 6(IV), each of which can form a triple helix structure with 2 other chains to generate type IV collagen network. Interacts with EFEMP2. In terms of processing, lysines at the third position of the tripeptide repeating unit (G-X-Y) are hydroxylated. The modified lysines can be O-glycosylated. Contains 4-hydroxyproline. Prolines at the third position of the tripeptide repeating unit (G-X-Y) are hydroxylated in some or all of the chains. Post-translationally, contains 3-hydroxyproline. This modification occurs on the first proline residue in the sequence motif Gly-Pro-Hyp, where Hyp is 4-hydroxyproline. In terms of processing, type IV collagens contain numerous cysteine residues which are involved in inter- and intramolecular disulfide bonding. 12 of these, located in the NC1 domain, are conserved in all known type IV collagens. The trimeric structure of the NC1 domains is stabilized by covalent bonds (sulfilimine cross-links) between Lys and Met residues. These cross-links are important for the mechanical stability of the basement membrane. Sulfilimine cross-link is catalyzed by PXDN. Post-translationally, proteolytic processing produces the C-terminal NC1 peptide, arresten. In terms of tissue distribution, detected in the basement membrane of the cornea (at protein level).

It is found in the secreted. The protein localises to the extracellular space. Its subcellular location is the extracellular matrix. The protein resides in the basement membrane. Its function is as follows. Type IV collagen is the major structural component of glomerular basement membranes (GBM), forming a 'chicken-wire' meshwork together with laminins, proteoglycans and entactin/nidogen. In terms of biological role, arresten, comprising the C-terminal NC1 domain, inhibits angiogenesis and tumor formation. The C-terminal half is found to possess the anti-angiogenic activity. Specifically inhibits endothelial cell proliferation, migration and tube formation. The protein is Collagen alpha-1(IV) chain of Mus musculus (Mouse).